The chain runs to 302 residues: UDP-N-acetylenolpyruvoylglucosamine reductase (302 aa).

In terms of domain architecture, FAD-binding PCMH-type spans 30–196; the sequence is IGGPADLFVE…IAATLEMKKG (167 aa). Arg-174 is an active-site residue. The Proton donor role is filled by Ser-225. The active site involves Glu-295.

Belongs to the MurB family. FAD serves as cofactor.

The protein localises to the cytoplasm. The enzyme catalyses UDP-N-acetyl-alpha-D-muramate + NADP(+) = UDP-N-acetyl-3-O-(1-carboxyvinyl)-alpha-D-glucosamine + NADPH + H(+). Its pathway is cell wall biogenesis; peptidoglycan biosynthesis. In terms of biological role, cell wall formation. This is UDP-N-acetylenolpyruvoylglucosamine reductase from Anoxybacillus flavithermus (strain DSM 21510 / WK1).